Consider the following 420-residue polypeptide: Probable 3-isopropylmalate dehydratase large subunit (420 aa).

[4Fe-4S] cluster-binding residues include Cys301, Cys361, and Cys364.

Belongs to the aconitase/IPM isomerase family. LeuC type 2 subfamily. As to quaternary structure, heterodimer of LeuC and LeuD. The cofactor is [4Fe-4S] cluster.

It carries out the reaction (2R,3S)-3-isopropylmalate = (2S)-2-isopropylmalate. It participates in amino-acid biosynthesis; L-leucine biosynthesis; L-leucine from 3-methyl-2-oxobutanoate: step 2/4. In terms of biological role, catalyzes the isomerization between 2-isopropylmalate and 3-isopropylmalate, via the formation of 2-isopropylmaleate. This Methanosarcina mazei (strain ATCC BAA-159 / DSM 3647 / Goe1 / Go1 / JCM 11833 / OCM 88) (Methanosarcina frisia) protein is Probable 3-isopropylmalate dehydratase large subunit.